Consider the following 141-residue polypeptide: Large ribosomal subunit protein uL11 (141 aa).

This sequence belongs to the universal ribosomal protein uL11 family. As to quaternary structure, part of the ribosomal stalk of the 50S ribosomal subunit. Interacts with L10 and the large rRNA to form the base of the stalk. L10 forms an elongated spine to which L12 dimers bind in a sequential fashion forming a multimeric L10(L12)X complex. In terms of processing, one or more lysine residues are methylated.

Functionally, forms part of the ribosomal stalk which helps the ribosome interact with GTP-bound translation factors. This Clostridium novyi (strain NT) protein is Large ribosomal subunit protein uL11.